Consider the following 714-residue polypeptide: Fatty acid oxidation complex subunit alpha (714 aa).

An enoyl-CoA hydratase region spans residues 1–190 (MEMASAFTLN…KLGLVDDVVP (190 aa)). A 3-hydroxyacyl-CoA dehydrogenase region spans residues 306 to 714 (APLNSVGILG…FWKTTATDLQ (409 aa)).

This sequence in the N-terminal section; belongs to the enoyl-CoA hydratase/isomerase family. It in the central section; belongs to the 3-hydroxyacyl-CoA dehydrogenase family. Heterotetramer of two alpha chains (FadJ) and two beta chains (FadI).

The protein resides in the cytoplasm. The catalysed reaction is a (3S)-3-hydroxyacyl-CoA = a (2E)-enoyl-CoA + H2O. The enzyme catalyses a 4-saturated-(3S)-3-hydroxyacyl-CoA = a (3E)-enoyl-CoA + H2O. It catalyses the reaction a (3S)-3-hydroxyacyl-CoA + NAD(+) = a 3-oxoacyl-CoA + NADH + H(+). It carries out the reaction (3S)-3-hydroxybutanoyl-CoA = (3R)-3-hydroxybutanoyl-CoA. The protein operates within lipid metabolism; fatty acid beta-oxidation. Functionally, catalyzes the formation of a hydroxyacyl-CoA by addition of water on enoyl-CoA. Also exhibits 3-hydroxyacyl-CoA epimerase and 3-hydroxyacyl-CoA dehydrogenase activities. The protein is Fatty acid oxidation complex subunit alpha of Shigella boydii serotype 4 (strain Sb227).